The following is a 108-amino-acid chain: T-cell acute lymphocytic leukemia protein 2 (108 aa).

In terms of domain architecture, bHLH spans 2-54 (TRKIFTNTRERWRQQNVNSAFAKLRKLIPTHPPDKKLSKNETLRLAMRYINFL). The disordered stretch occupies residues 89–108 (DRTLLENYQVPSPGPSHHIP).

This is T-cell acute lymphocytic leukemia protein 2 (TAL2) from Homo sapiens (Human).